A 410-amino-acid chain; its full sequence is Exodeoxyribonuclease 7 large subunit (410 aa).

This sequence belongs to the XseA family. Heterooligomer composed of large and small subunits.

Its subcellular location is the cytoplasm. The catalysed reaction is Exonucleolytic cleavage in either 5'- to 3'- or 3'- to 5'-direction to yield nucleoside 5'-phosphates.. Its function is as follows. Bidirectionally degrades single-stranded DNA into large acid-insoluble oligonucleotides, which are then degraded further into small acid-soluble oligonucleotides. The chain is Exodeoxyribonuclease 7 large subunit from Alkaliphilus metalliredigens (strain QYMF).